The following is a 103-amino-acid chain: Large ribosomal subunit protein uL24 (103 aa).

It belongs to the universal ribosomal protein uL24 family. Part of the 50S ribosomal subunit.

One of two assembly initiator proteins, it binds directly to the 5'-end of the 23S rRNA, where it nucleates assembly of the 50S subunit. In terms of biological role, one of the proteins that surrounds the polypeptide exit tunnel on the outside of the subunit. The polypeptide is Large ribosomal subunit protein uL24 (Bacillus cytotoxicus (strain DSM 22905 / CIP 110041 / 391-98 / NVH 391-98)).